The sequence spans 62 residues: Large ribosomal subunit protein bL32 (62 aa).

It belongs to the bacterial ribosomal protein bL32 family.

This chain is Large ribosomal subunit protein bL32 (rpmF), found in Treponema pallidum (strain Nichols).